Reading from the N-terminus, the 208-residue chain is NADH-quinone oxidoreductase subunit I 2 (208 aa).

4Fe-4S ferredoxin-type domains lie at 79 to 109 and 119 to 148; these read ILVEYGKSRCVVCLRCKRACPVPQLFEIEGK and SVFNMNMLLCTYCGFCVDACPVDCLYQTDI. Positions 88, 91, 94, 98, 128, 131, 134, and 138 each coordinate [4Fe-4S] cluster.

It belongs to the complex I 23 kDa subunit family. As to quaternary structure, NDH-1 is composed of 14 different subunits. Subunits NuoA, H, J, K, L, M, N constitute the membrane sector of the complex. Requires [4Fe-4S] cluster as cofactor.

It is found in the cell inner membrane. The catalysed reaction is a quinone + NADH + 5 H(+)(in) = a quinol + NAD(+) + 4 H(+)(out). In terms of biological role, NDH-1 shuttles electrons from NADH, via FMN and iron-sulfur (Fe-S) centers, to quinones in the respiratory chain. The immediate electron acceptor for the enzyme in this species is believed to be ubiquinone. Couples the redox reaction to proton translocation (for every two electrons transferred, four hydrogen ions are translocated across the cytoplasmic membrane), and thus conserves the redox energy in a proton gradient. The sequence is that of NADH-quinone oxidoreductase subunit I 2 from Aquifex aeolicus (strain VF5).